The primary structure comprises 1006 residues: Phosphatidylinositol 4,5-bisphosphate 5-phosphatase A (1006 aa).

The disordered stretch occupies residues 1–416; that stretch reads MEGQSSRGSR…SSSPWSAQPT (416 aa). The segment covering 27 to 41 has biased composition (polar residues); it reads VAQTGAPSKVDSSFQ. At R56 the chain carries Asymmetric dimethylarginine; alternate. Residue R56 is modified to Omega-N-methylarginine; alternate. Omega-N-methylarginine is present on R65. Asymmetric dimethylarginine is present on R76. The residue at position 83 (R83) is an Asymmetric dimethylarginine; alternate. An Omega-N-methylarginine; alternate modification is found at R83. The segment covering 94 to 112 has biased composition (polar residues); it reads GQKTATAHRSSSLAPTSVG. The short motif at 102-107 is the RSXSXX motif 1 element; sequence RSSSLA. Residues 180-193 are compositionally biased toward low complexity; sequence LAASGLSLALASEE. The segment covering 196-209 has biased composition (pro residues); the sequence is PELPSTPSPVPSPV. The span at 210 to 234 shows a compositional bias: low complexity; the sequence is LSPTQEQALAPASTASGAASVGQTS. Residues 256 to 273 show a composition bias toward polar residues; the sequence is PAQTSGPTGSPPCIQTSP. 2 positions are modified to phosphoserine: S291 and S324. Over residues 337-347 the composition is skewed to pro residues; the sequence is VPPPLPKPPRS. The SH3-binding signature appears at 345 to 350; the sequence is PRSPSR. 2 stretches are compositionally biased toward low complexity: residues 348–360 and 398–409; these read PSRSPSHSPNRSP and TTSSSTSTLSSS. Positions 350 to 355 match the RSXSXX motif 2 motif; sequence RSPSHS. Residues 425–728 are catalytic; the sequence is ITVVTWNVGT…SDHKPVAAQF (304 aa). The required for ruffle localization stretch occupies residues 729 to 840; it reads LLQFAFRDDM…IGITEPFQIS (112 aa). Residues 844-858 are compositionally biased toward low complexity; sequence SELASSSTDSSGTSS. The interval 844–1006 is disordered; that stretch reads SELASSSTDS…RGLEEGGLGP (163 aa). Short sequence motifs (RSXSXX motif) lie at residues 874–879 and 885–890; these read RSPSPG and RSRSPG. S903 is modified (phosphoserine). Residues 911 to 916 carry the RSXSXX motif 5 motif; that stretch reads RSPSPQ. The segment covering 927–946 has biased composition (low complexity); the sequence is RSSNGSSRGSSEEGPSGLPG. S990 carries the post-translational modification Phosphoserine.

This sequence belongs to the inositol 1,4,5-trisphosphate 5-phosphatase type II family.

It localises to the cytoplasm. The enzyme catalyses 1D-myo-inositol 1,4,5-trisphosphate + H2O = 1D-myo-inositol 1,4-bisphosphate + phosphate. The catalysed reaction is 1D-myo-inositol 1,3,4,5-tetrakisphosphate + H2O = 1D-myo-inositol 1,3,4-trisphosphate + phosphate. It carries out the reaction a 1,2-diacyl-sn-glycero-3-phospho-(1D-myo-inositol-4,5-bisphosphate) + H2O = a 1,2-diacyl-sn-glycero-3-phospho-(1D-myo-inositol 4-phosphate) + phosphate. Inositol 5-phosphatase, which converts inositol 1,4,5-trisphosphate to inositol 1,4-bisphosphate. Also converts phosphatidylinositol 4,5-bisphosphate to phosphatidylinositol 4-phosphate and inositol 1,3,4,5-tetrakisphosphate to inositol 1,3,4-trisphosphate in vitro. May be involved in modulation of the function of inositol and phosphatidylinositol polyphosphate-binding proteins that are present at membranes ruffles. The protein is Phosphatidylinositol 4,5-bisphosphate 5-phosphatase A (INPP5J) of Homo sapiens (Human).